Reading from the N-terminus, the 681-residue chain is Serine/threonine-protein kinase PAK 6 (681 aa).

3 disordered regions span residues 1-30 (MFRK…DPKE), 200-256 (QSSP…ESSL), and 268-355 (TAAT…PRTW). Residues 12–25 (ISAPQNFQHRVHTS) form the CRIB domain. A linker region spans residues 26 to 406 (FDPKEGKFVG…VVDQGDPRLL (381 aa)). Composition is skewed to low complexity over residues 201–212 (SSPPGASPPTGT) and 268–278 (TAATAPPSSSK). A compositionally biased stretch (polar residues) spans 308-333 (SLPSDQPVGTFSPLTTSDTSSPQKSL). One can recognise a Protein kinase domain in the interval 407–658 (LDSYVKIGEG…AQELLDHPFL (252 aa)). ATP-binding positions include 413–421 (IGEGSTGIV) and K436. D526 functions as the Proton acceptor in the catalytic mechanism. S560 carries the phosphoserine; by autocatalysis modification.

This sequence belongs to the protein kinase superfamily. STE Ser/Thr protein kinase family. STE20 subfamily. As to quaternary structure, interacts tightly with GTP-bound but not GDP-bound CDC42/p21 and RAC1. Interacts with the androgen receptor AR. Interacts with IQGAP1 and PPM1B. In terms of processing, autophosphorylated. Phosphorylated by MAP2K6/MAPKK6, leading to PAK6 activation.

It is found in the cytoplasm. It localises to the nucleus. It carries out the reaction L-seryl-[protein] + ATP = O-phospho-L-seryl-[protein] + ADP + H(+). It catalyses the reaction L-threonyl-[protein] + ATP = O-phospho-L-threonyl-[protein] + ADP + H(+). Its function is as follows. Serine/threonine protein kinase that plays a role in the regulation of gene transcription. The kinase activity is induced by various effectors including AR or MAP2K6/MAPKK6. Phosphorylates the DNA-binding domain of androgen receptor/AR and thereby inhibits AR-mediated transcription. Also inhibits ESR1-mediated transcription. May play a role in cytoskeleton regulation by interacting with IQGAP1. May protect cells from apoptosis through phosphorylation of BAD. In Pongo abelii (Sumatran orangutan), this protein is Serine/threonine-protein kinase PAK 6 (PAK6).